The chain runs to 278 residues: Urease accessory protein UreD (278 aa).

The protein belongs to the UreD family. As to quaternary structure, ureD, UreF and UreG form a complex that acts as a GTP-hydrolysis-dependent molecular chaperone, activating the urease apoprotein by helping to assemble the nickel containing metallocenter of UreC. The UreE protein probably delivers the nickel.

It localises to the cytoplasm. Functionally, required for maturation of urease via the functional incorporation of the urease nickel metallocenter. In Leptothrix cholodnii (strain ATCC 51168 / LMG 8142 / SP-6) (Leptothrix discophora (strain SP-6)), this protein is Urease accessory protein UreD.